Consider the following 422-residue polypeptide: Serine hydroxymethyltransferase (422 aa).

Residues L121 and 125-127 contribute to the (6S)-5,6,7,8-tetrahydrofolate site; that span reads GHL. An N6-(pyridoxal phosphate)lysine modification is found at K230. Residue 355–357 participates in (6S)-5,6,7,8-tetrahydrofolate binding; sequence SPF.

Belongs to the SHMT family. In terms of assembly, homodimer. It depends on pyridoxal 5'-phosphate as a cofactor.

Its subcellular location is the cytoplasm. It catalyses the reaction (6R)-5,10-methylene-5,6,7,8-tetrahydrofolate + glycine + H2O = (6S)-5,6,7,8-tetrahydrofolate + L-serine. Its pathway is one-carbon metabolism; tetrahydrofolate interconversion. It functions in the pathway amino-acid biosynthesis; glycine biosynthesis; glycine from L-serine: step 1/1. Catalyzes the reversible interconversion of serine and glycine with tetrahydrofolate (THF) serving as the one-carbon carrier. This reaction serves as the major source of one-carbon groups required for the biosynthesis of purines, thymidylate, methionine, and other important biomolecules. Also exhibits THF-independent aldolase activity toward beta-hydroxyamino acids, producing glycine and aldehydes, via a retro-aldol mechanism. The chain is Serine hydroxymethyltransferase from Teredinibacter turnerae (strain ATCC 39867 / T7901).